Here is a 553-residue protein sequence, read N- to C-terminus: Dihydroxy-acid dehydratase (553 aa).

Aspartate 78 provides a ligand contact to Mg(2+). Residue cysteine 119 participates in [2Fe-2S] cluster binding. The Mg(2+) site is built by aspartate 120 and lysine 121. N6-carboxylysine is present on lysine 121. Position 193 (cysteine 193) interacts with [2Fe-2S] cluster. Glutamate 441 lines the Mg(2+) pocket. The active-site Proton acceptor is the serine 467.

It belongs to the IlvD/Edd family. In terms of assembly, homodimer. [2Fe-2S] cluster is required as a cofactor. It depends on Mg(2+) as a cofactor.

It catalyses the reaction (2R)-2,3-dihydroxy-3-methylbutanoate = 3-methyl-2-oxobutanoate + H2O. The enzyme catalyses (2R,3R)-2,3-dihydroxy-3-methylpentanoate = (S)-3-methyl-2-oxopentanoate + H2O. It participates in amino-acid biosynthesis; L-isoleucine biosynthesis; L-isoleucine from 2-oxobutanoate: step 3/4. It functions in the pathway amino-acid biosynthesis; L-valine biosynthesis; L-valine from pyruvate: step 3/4. Functions in the biosynthesis of branched-chain amino acids. Catalyzes the dehydration of (2R,3R)-2,3-dihydroxy-3-methylpentanoate (2,3-dihydroxy-3-methylvalerate) into 2-oxo-3-methylpentanoate (2-oxo-3-methylvalerate) and of (2R)-2,3-dihydroxy-3-methylbutanoate (2,3-dihydroxyisovalerate) into 2-oxo-3-methylbutanoate (2-oxoisovalerate), the penultimate precursor to L-isoleucine and L-valine, respectively. The chain is Dihydroxy-acid dehydratase from Pelobacter propionicus (strain DSM 2379 / NBRC 103807 / OttBd1).